The chain runs to 788 residues: Mediator of RNA polymerase II transcription subunit 15 (788 aa).

Residues 9–73 form an interaction with SREBF1 region; it reads DWRSTAFRQK…IHFRDIHNKK (65 aa). Disordered regions lie at residues 95-139 and 260-329; these read GAAG…MAPH and QQQA…PLVS. Positions 108-117 are enriched in gly residues; the sequence is QSLGGMGSLG. Over residues 260–269 the composition is skewed to low complexity; that stretch reads QQQALQAQPP. Positions 270–284 are enriched in pro residues; sequence IQQPPMQQPQPPPSQ. 2 stretches are compositionally biased toward low complexity: residues 285 to 294 and 309 to 329; these read ALPQQLQQMH and PVAQ…PLVS. Arg349 carries the post-translational modification Asymmetric dimethylarginine. A disordered region spans residues 412–530; the sequence is SSSIPLGRQP…PAGSSQAEEQ (119 aa). A compositionally biased stretch (low complexity) spans 426 to 446; the sequence is SQSSLPMLSSPSPGQQVQTPQ. The span at 447–459 shows a compositional bias: pro residues; it reads SMPPPPQPSPQPG. Residues 460–482 are compositionally biased toward low complexity; the sequence is QPSSQPNSNVSSGPAPSPSSFLP. 2 stretches are compositionally biased toward polar residues: residues 493 to 503 and 511 to 529; these read VTARTPQNFSV and TPVN…QAEE. Residues 547–564 carry the Nuclear localization signal motif; sequence RRMINKIDKNEDRKKDLS. At Thr603 the chain carries Phosphothreonine.

The protein belongs to the Mediator complex subunit 15 family. In terms of assembly, component of the Mediator complex, which is composed of MED1, MED4, MED6, MED7, MED8, MED9, MED10, MED11, MED12, MED13, MED13L, MED14, MED15, MED16, MED17, MED18, MED19, MED20, MED21, MED22, MED23, MED24, MED25, MED26, MED27, MED29, MED30, MED31, CCNC, CDK8 and CDC2L6/CDK11. The MED12, MED13, CCNC and CDK8 subunits form a distinct module termed the CDK8 module. Mediator containing the CDK8 module is less active than Mediator lacking this module in supporting transcriptional activation. Individual preparations of the Mediator complex lacking one or more distinct subunits have been variously termed ARC, CRSP, DRIP, PC2, SMCC and TRAP. Interacts with SMAD2, SMAD3, SREBF1 and SREBF2. Interacts with WWTR1. Interacts with TRIM11. Post-translationally, ubiquitinated by TRIM11, leading to proteasomal degradation. Expressed in all tissues examined, including heart, brain, lung, spleen, thymus, pancreas, blood leukocyte and placenta. However, the level of expression varied, with highest expression in the placenta and peripheral blood and lowest in the pancreas and kidney.

Its subcellular location is the cytoplasm. It is found in the nucleus. Component of the Mediator complex, a coactivator involved in the regulated transcription of nearly all RNA polymerase II-dependent genes. Mediator functions as a bridge to convey information from gene-specific regulatory proteins to the basal RNA polymerase II transcription machinery. Mediator is recruited to promoters by direct interactions with regulatory proteins and serves as a scaffold for the assembly of a functional preinitiation complex with RNA polymerase II and the general transcription factors. Required for cholesterol-dependent gene regulation. Positively regulates the Nodal signaling pathway. The sequence is that of Mediator of RNA polymerase II transcription subunit 15 (MED15) from Homo sapiens (Human).